The chain runs to 380 residues: DNA replication and repair protein RecF (380 aa).

Position 30 to 37 (30 to 37 (GNNAQGKS)) interacts with ATP.

It belongs to the RecF family.

The protein resides in the cytoplasm. In terms of biological role, the RecF protein is involved in DNA metabolism; it is required for DNA replication and normal SOS inducibility. RecF binds preferentially to single-stranded, linear DNA. It also seems to bind ATP. This is DNA replication and repair protein RecF from Rippkaea orientalis (strain PCC 8801 / RF-1) (Cyanothece sp. (strain PCC 8801)).